A 607-amino-acid chain; its full sequence is Elongation factor 4 (607 aa).

The tr-type G domain occupies 11–193; the sequence is ENIRNFSIIA…KIVEVVPAPD (183 aa). GTP-binding positions include 23–28 and 140–143; these read DHGKST and NKID.

It belongs to the TRAFAC class translation factor GTPase superfamily. Classic translation factor GTPase family. LepA subfamily.

It localises to the cell membrane. It catalyses the reaction GTP + H2O = GDP + phosphate + H(+). Its function is as follows. Required for accurate and efficient protein synthesis under certain stress conditions. May act as a fidelity factor of the translation reaction, by catalyzing a one-codon backward translocation of tRNAs on improperly translocated ribosomes. Back-translocation proceeds from a post-translocation (POST) complex to a pre-translocation (PRE) complex, thus giving elongation factor G a second chance to translocate the tRNAs correctly. Binds to ribosomes in a GTP-dependent manner. This chain is Elongation factor 4, found in Staphylococcus aureus (strain MW2).